The sequence spans 190 residues: Potassium-transporting ATPase KdpC subunit (190 aa).

Residues Pro7 to Val27 form a helical membrane-spanning segment.

The protein belongs to the KdpC family. In terms of assembly, the system is composed of three essential subunits: KdpA, KdpB and KdpC.

The protein resides in the cell inner membrane. Functionally, part of the high-affinity ATP-driven potassium transport (or Kdp) system, which catalyzes the hydrolysis of ATP coupled with the electrogenic transport of potassium into the cytoplasm. This subunit acts as a catalytic chaperone that increases the ATP-binding affinity of the ATP-hydrolyzing subunit KdpB by the formation of a transient KdpB/KdpC/ATP ternary complex. The polypeptide is Potassium-transporting ATPase KdpC subunit (Methylococcus capsulatus (strain ATCC 33009 / NCIMB 11132 / Bath)).